The sequence spans 235 residues: REF/SRPP-like protein At2g47780 (235 aa).

Residues 1–12 (MAEDEIVVEEEQ) show a composition bias toward acidic residues. Positions 1–32 (MAEDEIVVEEEQSQPQEITPVPPSSSSSPSLV) are disordered.

This sequence belongs to the REF/SRPP family.

The chain is REF/SRPP-like protein At2g47780 from Arabidopsis thaliana (Mouse-ear cress).